The following is a 67-amino-acid chain: MKKGIHPEYIPCKVTCVTSGKEIEVLSTKPEMRIDISSFCHPFYTGSDKIADTAGRVEKFKQRYNLK.

It belongs to the bacterial ribosomal protein bL31 family. Type A subfamily. Part of the 50S ribosomal subunit.

Functionally, binds the 23S rRNA. This is Large ribosomal subunit protein bL31 from Helicobacter acinonychis (strain Sheeba).